The following is a 433-amino-acid chain: Alpha-(1,3)-fucosyltransferase 4 (433 aa).

The tract at residues 1–20 (MAPAGRKLQHESRCRPSRPV) is disordered. Topologically, residues 1–54 (MAPAGRKLQHESRCRPSRPVDAWRAAATTRGRCMGTPGARRTARRGGWGLPRTS) are cytoplasmic. Residues 55–74 (SGLAAAGLLCTALTACLCWG) traverse the membrane as a helical; Signal-anchor for type II membrane protein segment. The Lumenal segment spans residues 75–433 (QLPPLPWASP…IHNLADWFQR (359 aa)). N-linked (GlcNAc...) asparagine glycosylation is found at N117 and N218.

Belongs to the glycosyltransferase 10 family. In terms of tissue distribution, in adult, highest expression in spleen, testis, brain, lung, kidney and skeletal muscle and to a lesser extent in liver and heart.

It is found in the golgi apparatus. It localises to the golgi stack membrane. It carries out the reaction a beta-D-galactosyl-(1-&gt;4)-N-acetyl-beta-D-glucosaminyl derivative + GDP-beta-L-fucose = a beta-D-galactosyl-(1-&gt;4)-[alpha-L-fucosyl-(1-&gt;3)]-N-acetyl-beta-D-glucosaminyl derivative + GDP + H(+). The enzyme catalyses an N-acetyl-alpha-neuraminyl-(2-&gt;3)-beta-D-galactosyl-(1-&gt;4)-N-acetyl-beta-D-glucosaminyl derivative + GDP-beta-L-fucose = an alpha-Neu5Ac-(2-&gt;3)-beta-D-Gal-(1-&gt;4)-[alpha-L-Fuc-(1-&gt;3)]-beta-D-GlcNAc derivative + GDP + H(+). It catalyses the reaction an alpha-Neu5Ac-(2-&gt;3)-beta-D-Gal-(1-&gt;4)-beta-D-GlcNAc-(1-&gt;3)-beta-D-Gal-(1-&gt;4)-beta-D-GlcNAc derivative + GDP-beta-L-fucose = an alpha-Neu5Ac-(2-&gt;3)-beta-D-Gal-(1-&gt;4)-beta-D-GlcNAc-(1-&gt;3)-beta-D-Gal-(1-&gt;4)-[alpha-L-Fuc-(1-&gt;3)]-beta-D-GlcNAc derivative + GDP + H(+). The catalysed reaction is an alpha-Neu5Ac-(2-&gt;3)-beta-D-Gal-(1-&gt;4)-beta-D-GlcNAc6S derivative + GDP-beta-L-fucose = an alpha-Neu5Ac-(2-&gt;3)-beta-D-Gal-(1-&gt;4)-[alpha-L-Fuc-(1-&gt;3)]-beta-D-GlcNAc6S derivative + GDP + H(+). It functions in the pathway protein modification; protein glycosylation. Functionally, catalyzes alpha(1-&gt;3) linkage of fucosyl moiety transferred from GDP-beta-L-fucose to N-acetyl glucosamine (GlcNAc) within type 2 lactosamine (LacNAc, Gal-beta(1-&gt;4)GlcNAc) glycan attached to N- or O-linked glycoproteins. Robustly fucosylates nonsialylated distal LacNAc unit of the polylactosamine chain to form Lewis X antigen (CD15), a glycan determinant known to mediate important cellular functions in development and immunity. Fucosylates with lower efficiency sialylated LacNAc acceptors to form sialyl Lewis X and 6-sulfo sialyl Lewis X determinants that serve as recognition epitopes for C-type lectins. Together with FUT7 contributes to SELE, SELL and SELP selectin ligand biosynthesis and selectin-dependent lymphocyte homing, leukocyte migration and blood leukocyte homeostasis. In a cell type specific manner, may also fucosylate the internal LacNAc unit of the polylactosamine chain to form VIM-2 antigen that serves as recognition epitope for SELE. This Rattus norvegicus (Rat) protein is Alpha-(1,3)-fucosyltransferase 4 (Fut4).